A 454-amino-acid polypeptide reads, in one-letter code: Probable DNA primase large subunit (454 aa).

Residues C280, C359, C375, and C415 each contribute to the [4Fe-4S] cluster site.

It belongs to the eukaryotic-type primase large subunit family. As to quaternary structure, heterodimer of a small subunit and a large subunit. The cofactor is [4Fe-4S] cluster.

Its function is as follows. DNA primase is the polymerase that synthesizes small RNA primers for the Okazaki fragments made during discontinuous DNA replication. The chain is Probable DNA primase large subunit from Arabidopsis thaliana (Mouse-ear cress).